The primary structure comprises 494 residues: GDP-fucose protein O-fucosyltransferase 4 (494 aa).

The Cytoplasmic segment spans residues 1-7; sequence MAARYTE. Residues 8–24 traverse the membrane as a helical; Signal-anchor for type II membrane protein segment; that stretch reads AVLAALGVLSVCSASSS. Residues 25–494 are Lumenal-facing; sequence SGSGASGKAG…EIFMKRNKNL (470 aa). Asn-167 carries N-linked (GlcNAc...) asparagine glycosylation. A disulfide bridge links Cys-390 with Cys-393.

It belongs to the glycosyltransferase 10 family.

Its subcellular location is the endoplasmic reticulum membrane. It carries out the reaction L-threonyl-[protein] + GDP-beta-L-fucose = 3-O-(alpha-L-fucosyl)-L-threonyl-[protein] + GDP + H(+). The enzyme catalyses L-seryl-[protein] + GDP-beta-L-fucose = 3-O-(alpha-L-fucosyl)-L-seryl-[protein] + GDP + H(+). The protein operates within protein modification; protein glycosylation. Its function is as follows. Protein O-fucosyltransferase that specifically catalyzes O-fucosylation of serine or threonine residues in EMI domains of target proteins, such as MMRN1, MMRN2 and EMID1. Attaches fucose through an O-glycosidic linkage. O-fucosylation of EMI domain-containing proteins may be required for facilitating protein folding and secretion. Also shows minor alpha-(1,3)-fucosyltransferase activity toward activity toward biantennary N-glycan acceptors. However, this was tested with a library of synthetic substrates and this activity is unsure in vivo. This Rattus norvegicus (Rat) protein is GDP-fucose protein O-fucosyltransferase 4 (Fut11).